A 170-amino-acid polypeptide reads, in one-letter code: Ureidoglycolate lyase 1 (170 aa).

This sequence belongs to the ureidoglycolate lyase family. Homodimer. Ni(2+) is required as a cofactor.

It carries out the reaction (S)-ureidoglycolate = urea + glyoxylate. Its pathway is nitrogen metabolism; (S)-allantoin degradation. Functionally, catalyzes the catabolism of the allantoin degradation intermediate (S)-ureidoglycolate, generating urea and glyoxylate. Involved in the utilization of allantoin as nitrogen source. This Rhizobium meliloti (strain 1021) (Ensifer meliloti) protein is Ureidoglycolate lyase 1.